A 668-amino-acid polypeptide reads, in one-letter code: MATRRELANAIRFLSMDAVQKAKSGHPGAPMGMADIAEVLWRDFLKHNPSNPHWADRDRFILSNGHGSMLIYSLLHLSGYDLSIEDLKQFRQLHSKTPGHPEYGYAPGVETTTGPLGQGITNAVGFAIAEKTLAHQFNRPGHEIVDHHTYVFLGDGCLMEGISHEACSLAGTLGLGKLIAFYDDNNISIDGHVDGWFTDDTQKRFEAYGWHVIPAVDGHNPEQILEAVKQAQAETTKPTLIICKTIIGYGSPNKANSHDCHGAPLGDDEIAAAREFLKWEHAPFEIPAEIYAQWDAKEKGQVAEKAWEEKLAAYAKAYPELAAEFTRRVNAELPANWAAESQAFIEHLQANPANIASRKASQNAIEAYAKLLPEFLGGSADLASSNLTLWSGSKPIRAVENADGNYINYGVREFGMSAIMNGIALHGGFIPYGATFLMFMEYAHNAVRMAALMKQRSLFVYTHDSIGLGEDGPTHQPVEQTSALRLIPNLETWRPCDQVESAVAWKAAVERKEGPSALIFTRQNLAQMDRTAEQLANVARGGYVLRHCCENQNCPDLILIATGSEVELAMKAADVLDAEGVKVRVVSMPSTNVFDKQDAAYRESVLPSHITKRVAIEAGIADFWYKYVGFEGRVVGMNSFGESAPADQLFKLFGFTVENVVAKAKEIL.

His-26 serves as a coordination point for substrate. Thiamine diphosphate-binding positions include His-66 and 114–116; that span reads GPL. Residue Asp-155 participates in Mg(2+) binding. Thiamine diphosphate-binding residues include Gly-156 and Asn-185. Mg(2+) contacts are provided by Asn-185 and Ile-187. His-261, Arg-358, and Ser-385 together coordinate substrate. Residue His-261 participates in thiamine diphosphate binding. The Proton donor role is filled by Glu-413. Thiamine diphosphate is bound at residue Phe-439. Substrate-binding residues include His-463, Asp-471, and Arg-522.

This sequence belongs to the transketolase family. As to quaternary structure, homodimer. The cofactor is Mg(2+). Requires Ca(2+) as cofactor. It depends on Mn(2+) as a cofactor. Co(2+) serves as cofactor. Thiamine diphosphate is required as a cofactor.

It catalyses the reaction D-sedoheptulose 7-phosphate + D-glyceraldehyde 3-phosphate = aldehydo-D-ribose 5-phosphate + D-xylulose 5-phosphate. Functionally, catalyzes the transfer of a two-carbon ketol group from a ketose donor to an aldose acceptor, via a covalent intermediate with the cofactor thiamine pyrophosphate. In Pasteurella multocida (strain Pm70), this protein is Transketolase 2 (tktB).